Reading from the N-terminus, the 481-residue chain is Hyaluronidase-4 (481 aa).

Residues 1–8 (MKVLSEGQ) lie on the Cytoplasmic side of the membrane. Residues 9–29 (LKLCVVQPVHLTSWLLIFFIL) form a helical membrane-spanning segment. Residues 30 to 453 (KSISCLKPAR…ADCREIKTAD (424 aa)) lie on the Extracellular side of the membrane. 5 disulfides stabilise this stretch: Cys-59/Cys-351, Cys-223/Cys-237, Cys-376/Cys-387, Cys-381/Cys-435, and Cys-437/Cys-446. N-linked (GlcNAc...) asparagine glycosylation is found at Asn-86 and Asn-115. Glu-147 acts as the Proton donor in catalysis. Asn-177 carries N-linked (GlcNAc...) (complex) asparagine glycosylation. Residue Asn-343 is glycosylated (N-linked (GlcNAc...) asparagine). Residues 454–474 (GCSGVSPSPGSLMTLCLLLLA) traverse the membrane as a helical segment. Topologically, residues 475–481 (SYRSIQL) are cytoplasmic.

The protein belongs to the glycosyl hydrolase 56 family. Detected in placenta and skeletal muscle.

Its subcellular location is the membrane. It catalyses the reaction Random hydrolysis of (1-&gt;4)-linkages between N-acetyl-beta-D-glucosamine and D-glucuronate residues in hyaluronate.. In terms of biological role, endo-hyaluronidase that degrades hyaluronan to smaller oligosaccharide fragments. Also has chondroitin sulfate hydrolase activity, The best substrate being the galactosaminidic linkage in the sequence of a trisulfated tetrasaccharide. This Homo sapiens (Human) protein is Hyaluronidase-4 (HYAL4).